Here is a 249-residue protein sequence, read N- to C-terminus: Aquaporin SIP2-1 (249 aa).

2 consecutive transmembrane segments (helical) span residues 12–32 (PWLV…GALV) and 53–73 (VSLS…SGGA). Residues 76-78 (NPL) carry the NPA 1 motif. A run of 4 helical transmembrane segments spans residues 104–124 (AQVI…PNVG), 133–155 (AHHG…VTLK), 176–196 (IHLL…AFAW), and 210–230 (LVYW…VTFF). An NPA 2 motif is present at residues 189–191 (NPA).

The protein belongs to the MIP/aquaporin (TC 1.A.8) family. SIP (TC 1.A.8.10) subfamily.

The protein resides in the membrane. In terms of biological role, aquaporins facilitate the transport of water and small neutral solutes across cell membranes. The sequence is that of Aquaporin SIP2-1 (SIP2-1) from Zea mays (Maize).